The following is a 200-amino-acid chain: Mediator of RNA polymerase II transcription subunit 8 (200 aa).

Belongs to the Mediator complex subunit 8 family. Component of the Mediator complex.

It localises to the nucleus. Functionally, component of the Mediator complex, a coactivator involved in the regulated transcription of nearly all RNA polymerase II-dependent genes. Mediator functions as a bridge to convey information from gene-specific regulatory proteins to the basal RNA polymerase II transcription machinery. Mediator is recruited to promoters by direct interactions with regulatory proteins and serves as a scaffold for the assembly of a functional preinitiation complex with RNA polymerase II and the general transcription factors. The chain is Mediator of RNA polymerase II transcription subunit 8 (med8) from Schizosaccharomyces pombe (strain 972 / ATCC 24843) (Fission yeast).